A 330-amino-acid chain; its full sequence is MNNLFSSSWKRTGGGGGGDGDIESGGGVEMAPPPGAAAGASLDRFFEDVESIKDELRDLERIQRSLHDANEGGKSLHDAAAVRALRARMDADVAAAIKKAKVVKLRLESLDRANAANRSVPGCGPGSSTDRTRTSVVAGLRKKLRDSMESFSSLRARISSEYRETVARRYYTVTGEQPDEATLDNLAETGEGERFLQRAIAEQGRGEVLGVVAEIQERHGAVAELERSLLELHQVFNDMAVLVAAQGEQLDDIETHVGRARSFVDRGREQLVVARKHQKSTRKWTCIAIIILLVLILVVVLPIVLKFVNNNKSSSSSPAPATPSPPPPTA.

Over residues 1-10 (MNNLFSSSWK) the composition is skewed to polar residues. Residues 1–39 (MNNLFSSSWKRTGGGGGGDGDIESGGGVEMAPPPGAAAG) are disordered. At 1-284 (MNNLFSSSWK…RKHQKSTRKW (284 aa)) the chain is on the cytoplasmic side. The segment covering 12-28 (TGGGGGGDGDIESGGGV) has biased composition (gly residues). In terms of domain architecture, t-SNARE coiled-coil homology spans 212–274 (VAEIQERHGA…DRGREQLVVA (63 aa)). A helical; Anchor for type IV membrane protein membrane pass occupies residues 285–305 (TCIAIIILLVLILVVVLPIVL). At 306-330 (KFVNNNKSSSSSPAPATPSPPPPTA) the chain is on the vesicular side. The tract at residues 311 to 330 (NKSSSSSPAPATPSPPPPTA) is disordered. Residues 320-330 (PATPSPPPPTA) show a composition bias toward pro residues.

Belongs to the syntaxin family. As to quaternary structure, interacts with SNAP32. As to expression, expressed in roots, stems, leaf blades and leaf sheaths.

The protein localises to the cell membrane. In terms of biological role, vesicle trafficking protein that functions in the secretory pathway. Involved in plant defense by mediating host resistance to the rice blast fungus Magnaporthe oryzae. The interaction with SNAP32 may contribute to host resistance to the rice blast fungus. The sequence is that of Syntaxin-121 from Oryza sativa subsp. japonica (Rice).